The primary structure comprises 580 residues: Mucolipin-1 (580 aa).

Residues 1–38 (MTDPAGPRGSETERLLTPNPGYGTQVGPSPAPPTPPEE) form a disordered region. Topologically, residues 1 to 65 (MTDPAGPRGS…FRAKGRKPCK (65 aa)) are cytoplasmic. The residue at position 10 (Ser10) is a Phosphoserine. A Dileucine motif; mediates targeting to lysosomes motif is present at residues 11 to 16 (ETERLL). Residues 42-62 (RRRLKYFFMSPCDKFRAKGRK) are interaction with phosphoinositides. Residues 66 to 86 (LMLQVVKILVVTVQLILFGLS) traverse the membrane as a helical segment. Topologically, residues 87 to 298 (NQLAVTFREE…VFRHGDNSFR (212 aa)) are extracellular. The tract at residues 107 to 121 (LGYSDGADDTFAAYT) is extracellular/lumenal pore loop. A disulfide bridge connects residues Cys166 and Cys192. N-linked (GlcNAc...) asparagine glycosylation is present at Asn230. An intrachain disulfide couples Cys253 to Cys284. The helical transmembrane segment at 299–321 (LLFDVVVILTCSLSFLLCARSLL) threads the bilayer. The Cytoplasmic portion of the chain corresponds to 322–350 (RGFLLQNEFVRFMWRQRRRVISLWERLEF). A helical transmembrane segment spans residues 351–371 (VNGWYILLVTSDVLTISGTIM). Topologically, residues 372 to 382 (KIGIEAKNLAS) are extracellular. A helical membrane pass occupies residues 383–405 (YDVCSILLGTSTLLVWVGVIRYL). The Cytoplasmic portion of the chain corresponds to 406–427 (TFFHNYNILIATLRVALPSVMR). A helical membrane pass occupies residues 428–448 (FCCCVAVIYLGYCFCGWIVLG). The Extracellular segment spans residues 449–456 (PYHVKFRS). Residues 457–477 (LSMVSECLFSLINGDDMFVTF) constitute an intramembrane region (pore-forming). The Selectivity filter motif lies at 469–474 (NGDDMF). Over 478 to 491 (AAMQAQQGRSSLVW) the chain is Extracellular. A helical transmembrane segment spans residues 492–513 (LFSQLYLYSFISLFIYMVLSLF). The Cytoplasmic segment spans residues 514-580 (IALITGAYDT…PSEEHSLLVN (67 aa)). A phosphoserine; by PAK mark is found at Ser557 and Ser559. The required for palmitoylation and association with membranes stretch occupies residues 565–567 (CCC). The Dileucine internalization motif; mediates AP2 complex-dependent internalization motif lies at 573 to 578 (EEHSLL).

It belongs to the transient receptor (TC 1.A.4) family. Polycystin subfamily. MCOLN1 sub-subfamily. In terms of assembly, homotetramer. Homooligomer. Can heterooligomerize with MCOLN2 or MCOLN3; heteromeric assemblies have different channel properties as compared to the respective homooligomers and may be tissue-specific. Interacts with PDCD6. Interacts with TMEM163. Interacts with LAPTM4B. In terms of processing, palmitoylated; involved in association with membranes. Phosphorylation by PKA inhibits channel activity. Dephosphorylation increases activity. Post-translationally, proteolytically cleaved probably involving multiple lysosomal proteases including cathepsin B; inhibits lysosomal channel activity.

The protein resides in the late endosome membrane. It localises to the lysosome membrane. It is found in the cytoplasmic vesicle membrane. The protein localises to the cell projection. Its subcellular location is the phagocytic cup. The protein resides in the cytoplasmic vesicle. It localises to the phagosome membrane. It is found in the cell membrane. The enzyme catalyses Ca(2+)(in) = Ca(2+)(out). The catalysed reaction is Fe(2+)(in) = Fe(2+)(out). It carries out the reaction Mg(2+)(in) = Mg(2+)(out). It catalyses the reaction K(+)(in) = K(+)(out). The enzyme catalyses Na(+)(in) = Na(+)(out). Channel activity is controlled by multiple regulatory mechanisms in different subcellular compartments. Channel function is transiently modulated by changes in Ca(2+) in a pH-dependent manner; pH changes modify the aggregation state of unitary channels; a negative cooperativity between extracellular/lumenal Ca(2+) and H(+) is suggested. Regulated by phosphoinositides in a compartment-specific manner: in lysosomes activated by PtdIns(3,5)P2 (Phosphatidylinositol 3,5-bisphosphate) and at the plasma membrane inhibited by PtdIns(4,5)P2 (Phosphatidylinositol 4,5-bisphosphate). In terms of biological role, nonselective cation channel probably playing a role in the regulation of membrane trafficking events and of metal homeostasis. Acts as a Ca(2+)-permeable cation channel with inwardly rectifying activity. Proposed to play a major role in Ca(2+) release from late endosome and lysosome vesicles to the cytoplasm, which is important for many lysosome-dependent cellular events, including the fusion and trafficking of these organelles, exocytosis and autophagy. Required for efficient uptake of large particles in macrophages in which Ca(2+) release from the lysosomes triggers lysosomal exocytosis. May also play a role in phagosome-lysosome fusion. Involved in lactosylceramide trafficking indicative for a role in the regulation of late endocytic membrane fusion/fission events. By mediating lysosomal Ca(2+) release is involved in regulation of mTORC1 signaling and in mTOR/TFEB-dependent lysosomal adaptation to environmental cues such as nutrient levels. Seems to act as lysosomal active oxygen species (ROS) sensor involved in ROS-induced TFEB activation and autophagy. Also functions as a Fe(2+) permeable channel in late endosomes and lysosomes. Also permeable to Mg(2+), Na(+). K(+) and Cs(+). Proposed to play a role in zinc homeostasis probably implicating its association with TMEM163. In adaptive immunity, TRPML2 and TRPML1 may play redundant roles in the function of the specialized lysosomes of B cells. Its function is as follows. May contribute to cellular lipase activity within the late endosomal pathway or at the cell surface which may be involved in processes of membrane reshaping and vesiculation, especially the growth of tubular structures. However, it is not known, whether it conveys the enzymatic activity directly, or merely facilitates the activity of an associated phospholipase. In Macaca fascicularis (Crab-eating macaque), this protein is Mucolipin-1 (MCOLN1).